The chain runs to 451 residues: MTLYQLGNGKKFYTLTFGCQMNEHDSEVLAGMLDQMGFEKAASEEEADLLIINTCAVREKAEQKVLGKIGTLRYLKENKPDMKIAIGGCMVQQEHVANKIYRDFTHVDIIFGTHNINRFPQLLEHVMQKGKRVKEISQDDSQVFENLPHKREDSIKAWVVISYGCDNYCKYCIVPYVRGQQRSRDPEHIKYEVEKLAKEGLKEITLLGQNVNSYGKDLDQNISFTNLLEELSKIEGIERIRFMTSHPKDFDKELITTLKESNKICEHFHLPVQAGSNKILKKMGRGYTREHYVDIVNDIRAELPNASITTDIIVGYPGEEEEDFQETLDLVQNVKFDSAFTFVYSKRSGTPAAEMAEQVDEQTKKGRIQKLISVQQEISEQRNKDLENTVQRILVEGVSKNNEDMLSGRTRTDKLVHFPGDKELIGELVDVKITRGHSWNLYGEIFEDSLT.

The 119-residue stretch at 10–128 folds into the MTTase N-terminal domain; it reads KKFYTLTFGC…FPQLLEHVMQ (119 aa). [4Fe-4S] cluster-binding residues include C19, C55, C89, C165, C169, and C172. Residues 151–381 enclose the Radical SAM core domain; sequence REDSIKAWVV…ISVQQEISEQ (231 aa). The 64-residue stretch at 384 to 447 folds into the TRAM domain; it reads KDLENTVQRI…SWNLYGEIFE (64 aa).

Belongs to the methylthiotransferase family. MiaB subfamily. Monomer. [4Fe-4S] cluster is required as a cofactor.

It localises to the cytoplasm. The enzyme catalyses N(6)-dimethylallyladenosine(37) in tRNA + (sulfur carrier)-SH + AH2 + 2 S-adenosyl-L-methionine = 2-methylsulfanyl-N(6)-dimethylallyladenosine(37) in tRNA + (sulfur carrier)-H + 5'-deoxyadenosine + L-methionine + A + S-adenosyl-L-homocysteine + 2 H(+). Its function is as follows. Catalyzes the methylthiolation of N6-(dimethylallyl)adenosine (i(6)A), leading to the formation of 2-methylthio-N6-(dimethylallyl)adenosine (ms(2)i(6)A) at position 37 in tRNAs that read codons beginning with uridine. This chain is tRNA-2-methylthio-N(6)-dimethylallyladenosine synthase, found in Natranaerobius thermophilus (strain ATCC BAA-1301 / DSM 18059 / JW/NM-WN-LF).